Consider the following 276-residue polypeptide: Octanoyltransferase LipM (276 aa).

The 216-residue stretch at 32–247 folds into the BPL/LPL catalytic domain; the sequence is GALPPVIRFY…GFEKGLDIKL (216 aa). The Acyl-thioester intermediate role is filled by C149.

This sequence belongs to the octanoyltransferase LipM family. As to quaternary structure, monomer.

The enzyme catalyses octanoyl-[ACP] + L-lysyl-[protein] = N(6)-octanoyl-L-lysyl-[protein] + holo-[ACP] + H(+). It participates in protein modification; protein lipoylation via endogenous pathway; protein N(6)-(lipoyl)lysine from octanoyl-[acyl-carrier-protein]. Catalyzes the transfer of endogenously produced octanoic acid from octanoyl-acyl-carrier-protein onto the lipoyl domain of GcvH, an intermediate carrier during protein lipoylation. The sequence is that of Octanoyltransferase LipM from Macrococcus caseolyticus (strain JCSC5402) (Macrococcoides caseolyticum).